The chain runs to 170 residues: AP-5 complex subunit sigma-1 (170 aa).

As to quaternary structure, probably part of the adaptor protein complex 5 (AP-5) a tetramer composed of AP5B1, AP5M1, AP5S1 and AP5Z1. Interacts with ZFYVE26 and SPG11.

It localises to the cytoplasm. The protein localises to the cytosol. The protein resides in the late endosome membrane. Its subcellular location is the lysosome membrane. In terms of biological role, as part of AP-5, a probable fifth adaptor protein complex it may be involved in endosomal transport. The protein is AP-5 complex subunit sigma-1 (Ap5s1) of Mus musculus (Mouse).